A 318-amino-acid polypeptide reads, in one-letter code: NADH-ubiquinone oxidoreductase chain 1 (318 aa).

Transmembrane regions (helical) follow at residues 2–22 (FMINLLLTIVPILLAVAFLTL), 68–88 (ITMFIIAPILALTLALTMWTP), 100–120 (LGVLFMLAMSSLAVYSILWSG), 146–166 (LAIILLSVLLLSGSFALPALI), 171–191 (HMWLIIPSWPLAMMWFISTLA), 222–242 (LFFLAEYANIIMMNIFTTILF), 253–273 (ELYTINFALKATLLTISFLWV), and 294–314 (LPLTLALCMWHVTMPIITAGI).

This sequence belongs to the complex I subunit 1 family.

It is found in the mitochondrion inner membrane. It catalyses the reaction a ubiquinone + NADH + 5 H(+)(in) = a ubiquinol + NAD(+) + 4 H(+)(out). Core subunit of the mitochondrial membrane respiratory chain NADH dehydrogenase (Complex I) that is believed to belong to the minimal assembly required for catalysis. Complex I functions in the transfer of electrons from NADH to the respiratory chain. The immediate electron acceptor for the enzyme is believed to be ubiquinone. This Coelops frithii (East Asian tailless leaf-nosed bat) protein is NADH-ubiquinone oxidoreductase chain 1 (MT-ND1).